Consider the following 179-residue polypeptide: ATP synthase subunit delta (179 aa).

The protein belongs to the ATPase delta chain family. As to quaternary structure, F-type ATPases have 2 components, F(1) - the catalytic core - and F(0) - the membrane proton channel. F(1) has five subunits: alpha(3), beta(3), gamma(1), delta(1), epsilon(1). F(0) has three main subunits: a(1), b(2) and c(10-14). The alpha and beta chains form an alternating ring which encloses part of the gamma chain. F(1) is attached to F(0) by a central stalk formed by the gamma and epsilon chains, while a peripheral stalk is formed by the delta and b chains.

It is found in the cell membrane. Its function is as follows. F(1)F(0) ATP synthase produces ATP from ADP in the presence of a proton or sodium gradient. F-type ATPases consist of two structural domains, F(1) containing the extramembraneous catalytic core and F(0) containing the membrane proton channel, linked together by a central stalk and a peripheral stalk. During catalysis, ATP synthesis in the catalytic domain of F(1) is coupled via a rotary mechanism of the central stalk subunits to proton translocation. Functionally, this protein is part of the stalk that links CF(0) to CF(1). It either transmits conformational changes from CF(0) to CF(1) or is implicated in proton conduction. The protein is ATP synthase subunit delta of Clostridium botulinum (strain Alaska E43 / Type E3).